Here is a 98-residue protein sequence, read N- to C-terminus: NADH-ubiquinone oxidoreductase chain 4L (98 aa).

Helical transmembrane passes span 2–22 (PSIS…MLIF), 29–49 (SLLC…LTIL), and 61–81 (ILLL…LVTV).

Belongs to the complex I subunit 4L family. As to quaternary structure, core subunit of respiratory chain NADH dehydrogenase (Complex I) which is composed of 45 different subunits.

Its subcellular location is the mitochondrion inner membrane. It catalyses the reaction a ubiquinone + NADH + 5 H(+)(in) = a ubiquinol + NAD(+) + 4 H(+)(out). In terms of biological role, core subunit of the mitochondrial membrane respiratory chain NADH dehydrogenase (Complex I) which catalyzes electron transfer from NADH through the respiratory chain, using ubiquinone as an electron acceptor. Part of the enzyme membrane arm which is embedded in the lipid bilayer and involved in proton translocation. This Eulemur rubriventer (Red-bellied lemur) protein is NADH-ubiquinone oxidoreductase chain 4L (MT-ND4L).